The primary structure comprises 273 residues: 2,3,4,5-tetrahydropyridine-2,6-dicarboxylate N-succinyltransferase (273 aa).

Residues arginine 104 and aspartate 141 each coordinate substrate.

Belongs to the transferase hexapeptide repeat family. In terms of assembly, homotrimer.

The protein localises to the cytoplasm. It catalyses the reaction (S)-2,3,4,5-tetrahydrodipicolinate + succinyl-CoA + H2O = (S)-2-succinylamino-6-oxoheptanedioate + CoA. It functions in the pathway amino-acid biosynthesis; L-lysine biosynthesis via DAP pathway; LL-2,6-diaminopimelate from (S)-tetrahydrodipicolinate (succinylase route): step 1/3. The chain is 2,3,4,5-tetrahydropyridine-2,6-dicarboxylate N-succinyltransferase from Buchnera aphidicola subsp. Schizaphis graminum (strain Sg).